A 102-amino-acid chain; its full sequence is NADH-quinone oxidoreductase subunit K (102 aa).

3 helical membrane passes run 6–26, 30–50, and 65–85; these read MEHG…GLLI, LLFI…AFVV, and ILVI…LLLL.

The protein belongs to the complex I subunit 4L family. As to quaternary structure, NDH-1 is composed of 14 different subunits. Subunits NuoA, H, J, K, L, M, N constitute the membrane sector of the complex.

The protein resides in the cell inner membrane. The enzyme catalyses a quinone + NADH + 5 H(+)(in) = a quinol + NAD(+) + 4 H(+)(out). Functionally, NDH-1 shuttles electrons from NADH, via FMN and iron-sulfur (Fe-S) centers, to quinones in the respiratory chain. The immediate electron acceptor for the enzyme in this species is believed to be ubiquinone. Couples the redox reaction to proton translocation (for every two electrons transferred, four hydrogen ions are translocated across the cytoplasmic membrane), and thus conserves the redox energy in a proton gradient. The polypeptide is NADH-quinone oxidoreductase subunit K (Aeromonas hydrophila subsp. hydrophila (strain ATCC 7966 / DSM 30187 / BCRC 13018 / CCUG 14551 / JCM 1027 / KCTC 2358 / NCIMB 9240 / NCTC 8049)).